The following is a 425-amino-acid chain: CBS domain-containing protein CBSX6 (425 aa).

Residues 16–90 (GKPEMVEFYE…FLAKTECLQE (75 aa)) enclose the CBS 1 domain. Residues 159–172 (SENSSSSSGLSADS) are compositionally biased toward low complexity. The segment at 159–182 (SENSSSSSGLSADSTNRPTTSMTS) is disordered. Residues 173–182 (TNRPTTSMTS) are compositionally biased toward polar residues. A run of 2 helical transmembrane segments spans residues 200–220 (IGVLGALAPLPLTSISTLGII) and 275–295 (YLAAAWALANLYAGQFVMGVE). In terms of domain architecture, CBS 2 spans 347-409 (MYRGRSAPLT…TAVTKQPSAF (63 aa)).

The protein resides in the vacuole membrane. The sequence is that of CBS domain-containing protein CBSX6 (CBSX6) from Arabidopsis thaliana (Mouse-ear cress).